The chain runs to 87 residues: Large ribosomal subunit protein bL27 (87 aa).

The disordered stretch occupies residues 1–21 (MAHKKAGGSSRNGRDSESKRL).

This sequence belongs to the bacterial ribosomal protein bL27 family.

The protein is Large ribosomal subunit protein bL27 of Burkholderia multivorans (strain ATCC 17616 / 249).